Here is a 347-residue protein sequence, read N- to C-terminus: Protein pelota homolog (347 aa).

This sequence belongs to the eukaryotic release factor 1 family. Pelota subfamily. Monomer. Requires a divalent metal cation as cofactor.

It is found in the cytoplasm. In terms of biological role, may function in recognizing stalled ribosomes, interact with stem-loop structures in stalled mRNA molecules, and effect endonucleolytic cleavage of the mRNA. May play a role in the release non-functional ribosomes and degradation of damaged mRNAs. Has endoribonuclease activity. The polypeptide is Protein pelota homolog (Methanothrix thermoacetophila (strain DSM 6194 / JCM 14653 / NBRC 101360 / PT) (Methanosaeta thermophila)).